Reading from the N-terminus, the 203-residue chain is NADH-quinone oxidoreductase subunit C (203 aa).

This sequence belongs to the complex I 30 kDa subunit family. In terms of assembly, NDH-1 is composed of 14 different subunits. Subunits NuoB, C, D, E, F, and G constitute the peripheral sector of the complex.

The protein localises to the cell inner membrane. It carries out the reaction a quinone + NADH + 5 H(+)(in) = a quinol + NAD(+) + 4 H(+)(out). In terms of biological role, NDH-1 shuttles electrons from NADH, via FMN and iron-sulfur (Fe-S) centers, to quinones in the respiratory chain. The immediate electron acceptor for the enzyme in this species is believed to be ubiquinone. Couples the redox reaction to proton translocation (for every two electrons transferred, four hydrogen ions are translocated across the cytoplasmic membrane), and thus conserves the redox energy in a proton gradient. The chain is NADH-quinone oxidoreductase subunit C from Bartonella tribocorum (strain CIP 105476 / IBS 506).